A 400-amino-acid polypeptide reads, in one-letter code: Transmembrane protein 43 (400 aa).

At Ala-2 the chain carries N-acetylalanine. The Nuclear portion of the chain corresponds to 2–31 (AANYSSTSSRKEHVKVTSEPQPGFLERLSE). A helical transmembrane segment spans residues 32 to 52 (TSGGMFVGLMTFLLSFYLIFT). At 53-313 (NEGRALKTAT…NSMKTWGLRA (261 aa)) the chain is on the perinuclear space side. The helical transmembrane segment at 314 to 334 (AGWMAMFMGLNLMTRILYTLV) threads the bilayer. The Nuclear portion of the chain corresponds to 335-345 (DWFPVFRDLVN). The helical transmembrane segment at 346 to 366 (IGLKAFAFCVATSLTLLTVAA) threads the bilayer. Residues 367–368 (GW) are Perinuclear space-facing. A helical transmembrane segment spans residues 369 to 389 (LFYRPLWAALIGCLALVPIII). Over 390 to 400 (ARTRVPAKKLE) the chain is Nuclear.

Belongs to the TMEM43 family. In terms of assembly, can form oligomers through the transmembrane domains. Interacts with EMD; the interaction retains EMD at the inner nuclear membrane. Interacts with LMNA and LMNB2. Interacts with SUN2. Interacts with RNF26; this interaction is important to modulate innate immune signaling through the cGAS-STING pathway. Interacts with CARD10. Interacts with gap junctions proteins GJB2/Cx26 and GJB4/Cx30. As to expression, widely expressed, including in the cochlea, heart, eye, brain and kidney.

It localises to the endoplasmic reticulum membrane. The protein localises to the nucleus inner membrane. Its subcellular location is the cell membrane. Functionally, may have an important role in maintaining nuclear envelope structure by organizing protein complexes at the inner nuclear membrane. Required for retaining emerin at the inner nuclear membrane. Plays a role in the modulation of innate immune signaling through the cGAS-STING pathway by interacting with RNF26. In addition, functions as a critical signaling component in mediating NF-kappa-B activation by acting downstream of EGFR and upstream of CARD10. Contributes to passive conductance current in cochlear glia-like supporting cells, mediated by gap junctions and necessary for hearing. This is Transmembrane protein 43 (Tmem43) from Mus musculus (Mouse).